The following is a 376-amino-acid chain: Alanine racemase (376 aa).

The active-site Proton acceptor; specific for D-alanine is K36. K36 carries the post-translational modification N6-(pyridoxal phosphate)lysine. A substrate-binding site is contributed by R134. Y266 functions as the Proton acceptor; specific for L-alanine in the catalytic mechanism. M314 is a binding site for substrate.

This sequence belongs to the alanine racemase family. It depends on pyridoxal 5'-phosphate as a cofactor.

It carries out the reaction L-alanine = D-alanine. Its pathway is amino-acid biosynthesis; D-alanine biosynthesis; D-alanine from L-alanine: step 1/1. Catalyzes the interconversion of L-alanine and D-alanine. May also act on other amino acids. The chain is Alanine racemase (alr) from Nitratidesulfovibrio vulgaris (strain ATCC 29579 / DSM 644 / CCUG 34227 / NCIMB 8303 / VKM B-1760 / Hildenborough) (Desulfovibrio vulgaris).